A 274-amino-acid polypeptide reads, in one-letter code: Shikimate dehydrogenase (NADP(+)) (274 aa).

Shikimate is bound by residues serine 14–serine 16 and threonine 60. The active-site Proton acceptor is lysine 64. Glutamate 76 serves as a coordination point for NADP(+). Residues asparagine 85 and aspartate 101 each coordinate shikimate. Residues glycine 126–alanine 130, asparagine 150–lysine 155, and methionine 214 each bind NADP(+). Tyrosine 216 contacts shikimate. Glycine 238 is a binding site for NADP(+).

This sequence belongs to the shikimate dehydrogenase family. As to quaternary structure, homodimer.

The catalysed reaction is shikimate + NADP(+) = 3-dehydroshikimate + NADPH + H(+). It participates in metabolic intermediate biosynthesis; chorismate biosynthesis; chorismate from D-erythrose 4-phosphate and phosphoenolpyruvate: step 4/7. In terms of biological role, involved in the biosynthesis of the chorismate, which leads to the biosynthesis of aromatic amino acids. Catalyzes the reversible NADPH linked reduction of 3-dehydroshikimate (DHSA) to yield shikimate (SA). The chain is Shikimate dehydrogenase (NADP(+)) from Pseudomonas paraeruginosa (strain DSM 24068 / PA7) (Pseudomonas aeruginosa (strain PA7)).